The following is a 213-amino-acid chain: Phosphatidylserine decarboxylase proenzyme (213 aa).

The Schiff-base intermediate with substrate; via pyruvic acid role is filled by serine 182. Residue serine 182 is modified to Pyruvic acid (Ser); by autocatalysis.

This sequence belongs to the phosphatidylserine decarboxylase family. PSD-A subfamily. Heterodimer of a large membrane-associated beta subunit and a small pyruvoyl-containing alpha subunit. Pyruvate is required as a cofactor. In terms of processing, is synthesized initially as an inactive proenzyme. Formation of the active enzyme involves a self-maturation process in which the active site pyruvoyl group is generated from an internal serine residue via an autocatalytic post-translational modification. Two non-identical subunits are generated from the proenzyme in this reaction, and the pyruvate is formed at the N-terminus of the alpha chain, which is derived from the carboxyl end of the proenzyme. The post-translation cleavage follows an unusual pathway, termed non-hydrolytic serinolysis, in which the side chain hydroxyl group of the serine supplies its oxygen atom to form the C-terminus of the beta chain, while the remainder of the serine residue undergoes an oxidative deamination to produce ammonia and the pyruvoyl prosthetic group on the alpha chain.

It localises to the cell membrane. The enzyme catalyses a 1,2-diacyl-sn-glycero-3-phospho-L-serine + H(+) = a 1,2-diacyl-sn-glycero-3-phosphoethanolamine + CO2. The protein operates within phospholipid metabolism; phosphatidylethanolamine biosynthesis; phosphatidylethanolamine from CDP-diacylglycerol: step 2/2. Its function is as follows. Catalyzes the formation of phosphatidylethanolamine (PtdEtn) from phosphatidylserine (PtdSer). This is Phosphatidylserine decarboxylase proenzyme from Chlorobium phaeobacteroides (strain BS1).